The following is a 166-amino-acid chain: Regulatory protein RecX (166 aa).

This sequence belongs to the RecX family.

It is found in the cytoplasm. Its function is as follows. Modulates RecA activity. In Salmonella agona (strain SL483), this protein is Regulatory protein RecX.